The sequence spans 86 residues: Mu-theraphotoxin-Cg2a 1 (86 aa).

The N-terminal stretch at 1 to 21 (MKVSVVITLAVLGIMFVWASA) is a signal peptide. Residues 22–50 (AELEERGSDQRDSPAWLKSMERIFQSEER) constitute a propeptide that is removed on maturation. Intrachain disulfides connect cysteine 52–cysteine 66, cysteine 59–cysteine 71, and cysteine 65–cysteine 78. At phenylalanine 84 the chain carries Phenylalanine amide.

The protein belongs to the neurotoxin 10 (Hwtx-1) family. 37 (Jztx-31) subfamily. Expressed by the venom gland.

It is found in the secreted. Functionally, inhibits both peak current and fast inactivation of voltage-gated sodium channels (Nav) channels. Inhibits the inactivation of Nav on DRG neurons (EC(50)=1.77 uM) and peak current of cardiac myocytes (IC(50)=0.90 uM). In Chilobrachys guangxiensis (Chinese earth tiger tarantula), this protein is Mu-theraphotoxin-Cg2a 1.